A 93-amino-acid chain; its full sequence is Small ribosomal subunit protein uS19 (93 aa).

It belongs to the universal ribosomal protein uS19 family.

In terms of biological role, protein S19 forms a complex with S13 that binds strongly to the 16S ribosomal RNA. The polypeptide is Small ribosomal subunit protein uS19 (Agathobacter rectalis (strain ATCC 33656 / DSM 3377 / JCM 17463 / KCTC 5835 / VPI 0990) (Eubacterium rectale)).